The chain runs to 507 residues: Protoheme IX farnesyltransferase, mitochondrial (507 aa).

Low complexity predominate over residues 72–90 (STSASASTTHDSTLSSSPT). Residues 72–136 (STSASASTTH…RGEKPLPPDA (65 aa)) form a disordered region. A compositionally biased stretch (basic residues) spans 99–111 (KDHKIAPHRKRQA). The next 8 membrane-spanning stretches (helical) occupy residues 166–186 (LTML…VPEM), 199–219 (PLTL…ANAL), 248–268 (AAVL…YFGV), 270–290 (PTVS…YTPL), 298–318 (TWIG…AAAG), 339–359 (IGGW…FMAL), 392–412 (FVFI…WSFA), and 441–461 (GLFW…LLHK).

This sequence belongs to the UbiA prenyltransferase family.

It is found in the mitochondrion membrane. It carries out the reaction heme b + (2E,6E)-farnesyl diphosphate + H2O = Fe(II)-heme o + diphosphate. In terms of biological role, converts protoheme IX and farnesyl diphosphate to heme O. The chain is Protoheme IX farnesyltransferase, mitochondrial (COX10) from Gibberella zeae (strain ATCC MYA-4620 / CBS 123657 / FGSC 9075 / NRRL 31084 / PH-1) (Wheat head blight fungus).